The sequence spans 409 residues: MSRYVFTSESVTEGHPDKICDQVSDAVLDACLSEDPTSRVACEAVVNTGLCLITGEITSKAEVDFNKLVREVIKNIGYRSASDGGFDANSCAVLVALDQQSSDIAQGVNEAEDHSTDPLDQVGAGDQGIMFGFACDETPELMPLPISLAHRLARRLALVRHQQLIDYLLPDGKTQVSVSYENGVPCSIDTILISTQHKSEVDGITLEEEIQKRIAKDLWKFVVEPATEDLPLKPAKGSTRFLVNPTGKFVIGGPQGDAGLTGRKIIVDTYGGYARHGGGAFSGKDPTKVDRSAAYAARFVAKALVAANLAKKVEVQLSYAIGVAKPISILVDSFGTGKVSDSELTQLVQDQFDLRPGAIIKAFDLQNLPSIRGGRFYRDTAAYGHFGRTDILLPWEDVSQKAKELSLLK.

Histidine 15 contributes to the ATP binding site. Position 17 (aspartate 17) interacts with Mg(2+). A K(+)-binding site is contributed by glutamate 43. L-methionine-binding residues include glutamate 56 and glutamine 100. Positions 100–110 (QSSDIAQGVNE) are flexible loop. ATP contacts are provided by residues 171–173 (DGK), 248–249 (KF), aspartate 257, 263–264 (RK), alanine 280, and lysine 284. Aspartate 257 serves as a coordination point for L-methionine. L-methionine is bound at residue lysine 288.

The protein belongs to the AdoMet synthase family. Homotetramer; dimer of dimers. Requires Mg(2+) as cofactor. It depends on K(+) as a cofactor.

The protein localises to the cytoplasm. The catalysed reaction is L-methionine + ATP + H2O = S-adenosyl-L-methionine + phosphate + diphosphate. Its pathway is amino-acid biosynthesis; S-adenosyl-L-methionine biosynthesis; S-adenosyl-L-methionine from L-methionine: step 1/1. Catalyzes the formation of S-adenosylmethionine (AdoMet) from methionine and ATP. The overall synthetic reaction is composed of two sequential steps, AdoMet formation and the subsequent tripolyphosphate hydrolysis which occurs prior to release of AdoMet from the enzyme. This Prochlorococcus marinus (strain NATL2A) protein is S-adenosylmethionine synthase.